Reading from the N-terminus, the 242-residue chain is Peptidyl-prolyl cis-trans isomerase FKBP20-2, chloroplastic (242 aa).

The N-terminal 31 residues, 1 to 31 (MVTILSTPLSPRLTFLCETKLSLSRSNRSVC), are a transit peptide targeting the chloroplast. A thylakoid-targeting transit peptide spans 32 to 67 (CSLSEEPKDQCLSRRSLVYVLVASPCLLLPALSSSA). One can recognise a PPIase FKBP-type domain in the interval 138–225 (GQQVTFHYIG…VFDVELLSIQ (88 aa)). Cysteine 227 and cysteine 241 are disulfide-bonded.

It belongs to the FKBP-type PPIase family. In terms of assembly, interacts in vitro with LTO1.

Its subcellular location is the plastid. It localises to the chloroplast thylakoid lumen. It carries out the reaction [protein]-peptidylproline (omega=180) = [protein]-peptidylproline (omega=0). Functionally, PPIases accelerate the folding of proteins. It catalyzes the cis-trans isomerization of proline imidic peptide bonds in oligopeptides. Involved in the accumulation of the PSII complex. This is Peptidyl-prolyl cis-trans isomerase FKBP20-2, chloroplastic from Arabidopsis thaliana (Mouse-ear cress).